Here is a 20-residue protein sequence, read N- to C-terminus: Agglutinin beta-2 chain isoform 1 (20 aa).

A compositionally biased stretch (polar residues) spans 1–10 (TQSTGTSQTI). The disordered stretch occupies residues 1 to 20 (TQSTGTSQTIAVGLWGGPDN).

This sequence belongs to the jacalin lectin family. As to quaternary structure, tetramer of four alpha chains associated with two or four beta chains.

Functionally, alpha-methyl-D-mannoside and D-mannose specific lectin. Binds IgA. This Morus nigra (Black mulberry) protein is Agglutinin beta-2 chain isoform 1.